A 68-amino-acid polypeptide reads, in one-letter code: MRTSYLLLFTLCLLLSEMASGDNFLTGLGHRSDHYNCVRSGGQCLYSACPIYTKIQGTCYQGKAKCCK.

The first 21 residues, 1 to 21, serve as a signal peptide directing secretion; the sequence is MRTSYLLLFTLCLLLSEMASG. The propeptide occupies 22–32; it reads DNFLTGLGHRS. 3 disulfide bridges follow: Cys-37–Cys-66, Cys-44–Cys-59, and Cys-49–Cys-67.

The protein belongs to the beta-defensin family. In terms of assembly, monomer. Homodimer.

It localises to the secreted. It is found in the membrane. Its function is as follows. Has bactericidal activity. May act as a ligand for C-C chemokine receptor CCR6. Positively regulates the sperm motility and bactericidal activity in a CCR6-dependent manner. Binds to CCR6 and triggers Ca2+ mobilization in the sperm which is important for its motility. The chain is Beta-defensin 1 (DEFB1) from Hylobates moloch (Silvery gibbon).